Reading from the N-terminus, the 132-residue chain is Transcription antitermination protein NusB (132 aa).

Belongs to the NusB family.

Its function is as follows. Involved in transcription antitermination. Required for transcription of ribosomal RNA (rRNA) genes. Binds specifically to the boxA antiterminator sequence of the ribosomal RNA (rrn) operons. The chain is Transcription antitermination protein NusB from Campylobacter jejuni subsp. doylei (strain ATCC BAA-1458 / RM4099 / 269.97).